The chain runs to 438 residues: GTPase Der (438 aa).

2 EngA-type G domains span residues 4–168 and 177–352; these read PIVA…KNEG and IKIA…DNYC. GTP is bound by residues 10 to 17, 57 to 61, 120 to 123, 183 to 190, 230 to 234, and 295 to 298; these read GRPNVGKS, DTGGI, NKID, GKPNVGKS, DTAGV, and NKWD. The KH-like domain maps to 353 to 437; that stretch reads KQIKTGILND…GIKLEFRERK (85 aa).

It belongs to the TRAFAC class TrmE-Era-EngA-EngB-Septin-like GTPase superfamily. EngA (Der) GTPase family. In terms of assembly, associates with the 50S ribosomal subunit.

Its function is as follows. GTPase that plays an essential role in the late steps of ribosome biogenesis. This chain is GTPase Der, found in Clostridium kluyveri (strain NBRC 12016).